Consider the following 245-residue polypeptide: TLC domain-containing protein 5 (245 aa).

A run of 6 helical transmembrane segments spans residues Met1 to Ile21, Leu38 to Asp58, Val75 to Phe95, Gly99 to Leu119, Phe162 to Cys182, and Trp191 to Ile211. Residues His29 to Ser204 form the TLC domain.

It belongs to the TLCD5 family.

It localises to the membrane. This Homo sapiens (Human) protein is TLC domain-containing protein 5.